The following is a 61-amino-acid chain: uncharacterized protein (61 aa).

The interval 38 to 61 is disordered; that stretch reads TPRPFTPGLADPRRLGPRRVQAAQ.

This is an uncharacterized protein from Homo sapiens (Human).